A 185-amino-acid chain; its full sequence is Elongation factor P (185 aa).

The protein belongs to the elongation factor P family.

The protein resides in the cytoplasm. It functions in the pathway protein biosynthesis; polypeptide chain elongation. Involved in peptide bond synthesis. Stimulates efficient translation and peptide-bond synthesis on native or reconstituted 70S ribosomes in vitro. Probably functions indirectly by altering the affinity of the ribosome for aminoacyl-tRNA, thus increasing their reactivity as acceptors for peptidyl transferase. This is Elongation factor P from Lactococcus lactis subsp. cremoris (strain MG1363).